We begin with the raw amino-acid sequence, 431 residues long: Peptidase B (431 aa).

Positions 196 and 201 each coordinate Mn(2+). Lysine 208 is an active-site residue. Mn(2+)-binding residues include aspartate 219, aspartate 278, and glutamate 280. Arginine 282 is an active-site residue.

Belongs to the peptidase M17 family. As to quaternary structure, homohexamer. Mn(2+) serves as cofactor.

Its subcellular location is the cytoplasm. The enzyme catalyses Release of an N-terminal amino acid, Xaa, from a peptide or arylamide. Xaa is preferably Glu or Asp but may be other amino acids, including Leu, Met, His, Cys and Gln.. Probably plays an important role in intracellular peptide degradation. This Serratia proteamaculans (strain 568) protein is Peptidase B.